Consider the following 101-residue polypeptide: Small ribosomal subunit protein eS24 (101 aa).

This sequence belongs to the eukaryotic ribosomal protein eS24 family.

The polypeptide is Small ribosomal subunit protein eS24 (Methanosarcina acetivorans (strain ATCC 35395 / DSM 2834 / JCM 12185 / C2A)).